Here is a 155-residue protein sequence, read N- to C-terminus: Protein SprT-like (155 aa).

The 138-residue stretch at 7–144 (QRHMEEVSLQ…CGSCGGKLKQ (138 aa)) folds into the SprT-like domain. Histidine 67 provides a ligand contact to Zn(2+). Glutamate 68 is an active-site residue. Position 71 (histidine 71) interacts with Zn(2+).

It belongs to the SprT family. Requires Zn(2+) as cofactor.

It is found in the cytoplasm. This chain is Protein SprT-like, found in Listeria welshimeri serovar 6b (strain ATCC 35897 / DSM 20650 / CCUG 15529 / CIP 8149 / NCTC 11857 / SLCC 5334 / V8).